The chain runs to 1436 residues: Antigen WC1.1 (1436 aa).

An N-terminal signal peptide occupies residues 1-25 (MALGRHLSLRGLCVLLLGTMVGGQA). SRCR domains lie at 28-131 (LRLK…VVCS), 134-234 (VRLA…VVCS), and 239-340 (VRLM…VICS). Intrachain disulfides connect C66-C130 and C97-C107. A glycan (N-linked (GlcNAc...) asparagine) is linked at N162. 2 cysteine pairs are disulfide-bonded: C172–C233 and C203–C213. Residues N244 and N256 are each glycosylated (N-linked (GlcNAc...) asparagine). Intrachain disulfides connect C265/C329, C278/C339, and C309/C319. 3 N-linked (GlcNAc...) asparagine glycosylation sites follow: N351, N424, and N444. 5 consecutive SRCR domains span residues 376–476 (LRLV…VICS), 481–581 (LRMV…IWCA), 586–686 (IRLV…VICS), 689–789 (VRLA…VVCS), and 794–895 (VQLM…VICS). 3 cysteine pairs are disulfide-bonded: C401-C465, C414-C475, and C445-C455. 2 N-linked (GlcNAc...) asparagine glycosylation sites follow: N499 and N531. 6 disulfides stabilise this stretch: C506-C570, C519-C580, C550-C560, C611-C675, C624-C685, and C655-C665. N717 carries N-linked (GlcNAc...) asparagine glycosylation. 2 cysteine pairs are disulfide-bonded: C727–C788 and C758–C768. N799 carries N-linked (GlcNAc...) asparagine glycosylation. Cystine bridges form between C820–C884, C833–C894, and C864–C874. 3 N-linked (GlcNAc...) asparagine glycosylation sites follow: N897, N979, and N999. 3 consecutive SRCR domains span residues 931 to 1031 (LRLV…VICS), 1036 to 1136 (LRMV…ISCE), and 1155 to 1255 (LRLR…VRCS). 3 disulfides stabilise this stretch: C956–C1020, C969–C1030, and C1000–C1010. N-linked (GlcNAc...) asparagine glycans are attached at residues N1054 and N1086. 3 cysteine pairs are disulfide-bonded: C1061–C1125, C1074–C1135, and C1105–C1115. N-linked (GlcNAc...) asparagine glycans are attached at residues N1173 and N1214. Cystine bridges form between C1180–C1244, C1193–C1254, and C1224–C1234. Positions 1337 to 1410 (EGLGSPDQMT…PGEGEESFWL (74 aa)) are disordered. Residues 1348 to 1358 (VPDENYDDAEE) show a composition bias toward acidic residues. Residues 1384–1393 (RSSQTGSFLN) show a composition bias toward polar residues. N1393 is a glycosylation site (N-linked (GlcNAc...) asparagine).

Expressed on subsets of CD4-CD8- gamma delta T lymphocytes.

It is found in the secreted. The polypeptide is Antigen WC1.1 (Bos taurus (Bovine)).